A 287-amino-acid chain; its full sequence is Shikimate kinase (287 aa).

87-97 lines the ATP pocket; it reads PLASGLKSSSA.

Belongs to the GHMP kinase family. Archaeal shikimate kinase subfamily.

It is found in the cytoplasm. The catalysed reaction is shikimate + ATP = 3-phosphoshikimate + ADP + H(+). The protein operates within metabolic intermediate biosynthesis; chorismate biosynthesis; chorismate from D-erythrose 4-phosphate and phosphoenolpyruvate: step 5/7. In Methanococcoides burtonii (strain DSM 6242 / NBRC 107633 / OCM 468 / ACE-M), this protein is Shikimate kinase.